The sequence spans 84 residues: Small ribosomal subunit protein uS17 (84 aa).

The protein belongs to the universal ribosomal protein uS17 family. Part of the 30S ribosomal subunit.

Its function is as follows. One of the primary rRNA binding proteins, it binds specifically to the 5'-end of 16S ribosomal RNA. This is Small ribosomal subunit protein uS17 from Sodalis glossinidius (strain morsitans).